The chain runs to 1063 residues: E3 ubiquitin-protein ligase PDZRN3 (1063 aa).

Residues 18–56 form an RING-type; degenerate zinc finger; sequence CALCHKVLEDPLTTPCGHVFCAGCVLPWVVQEGSCPARC. Residues 100–158 form a TRAF-type zinc finger; the sequence is EHLERCDFAPARCRHAGCGQLLLRRDVEAHMRDACDARPVGRCQEGCGLPLTHGEQRAG. 2 PDZ domains span residues 249–339 and 419–503; these read TLVL…LRRT and EVGL…IARP. Ser-427 carries the phosphoserine modification. The tract at residues 545 to 602 is disordered; the sequence is QKKHEEDGGTTDTATILSNQHEKDSGVGRTDESTRNDESSEQENNGEDATASANPLAG. Over residues 554–563 the composition is skewed to polar residues; that stretch reads TTDTATILSN. Over residues 564–582 the composition is skewed to basic and acidic residues; it reads QHEKDSGVGRTDESTRNDE. A coiled-coil region spans residues 680–705; it reads ESVDKELELLNEELRSIELECLSIVR. Over residues 746–755 the composition is skewed to basic and acidic residues; the sequence is ELPEKSDKDS. Disordered stretches follow at residues 746–798 and 834–853; these read ELPE…IEAY and IKERRGSDGSRSPTASPKLG. Positions 756–770 are enriched in polar residues; the sequence is SSAYNTGESCRSTPL.

In terms of assembly, interacts with NLGN1 and EFNB2. Interacts with UBE2D2 and with MUSK via the first PDZ domain. In myotubes, the interaction between PDZRN3 and MUSK is enhanced upon agrin stimulation. In terms of processing, auto-ubiquitinated. As to expression, highly expressed in skeletal and cardiac muscle and at lower levels in spinal cord and brain (at protein level). Also expressed in kidney and lung. In muscles, concentrated at the neuromuscular junction (NMJ).

It localises to the synapse. The protein resides in the cytoplasm. It catalyses the reaction S-ubiquitinyl-[E2 ubiquitin-conjugating enzyme]-L-cysteine + [acceptor protein]-L-lysine = [E2 ubiquitin-conjugating enzyme]-L-cysteine + N(6)-ubiquitinyl-[acceptor protein]-L-lysine.. The protein operates within protein modification; protein ubiquitination. Its function is as follows. E3 ubiquitin-protein ligase. Plays an important role in regulating the surface level of MUSK on myotubes. Mediates the ubiquitination of MUSK, promoting its endocytosis and lysosomal degradation. Might contribute to terminal myogenic differentiation. In Mus musculus (Mouse), this protein is E3 ubiquitin-protein ligase PDZRN3 (Pdzrn3).